The sequence spans 126 residues: Adenosine 5'-monophosphoramidase HINT1 (126 aa).

At A2 the chain carries N-acetylalanine. The region spanning 18–126 (IFGKIIRKEI…GGRQMHWPPG (109 aa)) is the HIT domain. Residues K21 and K30 each carry the N6-acetyllysine modification. 43-44 (DI) lines the AMP pocket. Residues S45 and S72 each carry the phosphoserine modification. AMP is bound by residues N99, 105-107 (GQS), and 112-114 (HLH). The Histidine triad motif signature appears at 110–114 (HVHLH). Catalysis depends on H112, which acts as the Tele-AMP-histidine intermediate.

Belongs to the HINT family. Homodimer. Interacts with CDK7. Interacts with RUVBL1 and RUVBL2 and is associated with the LEF1/TCF1-CTNNB1 complex and with a KAT5 histone acetyltransferase complex. Identified in a complex with MITF and CTNNB1. Interacts with CDC34 and RBX1, and is part of a SCF (SKP2-CUL1-F-box protein) E3 ubiquitin-protein ligase complex. Interacts with SUMO1, SUMO2 and RGS17. Interacts with the Ten-1 ICD form of TENM1. Interacts with CALM1; interaction increases in the presence of calcium ions.

It is found in the cytoplasm. Its subcellular location is the nucleus. The enzyme catalyses adenosine 5'-phosphoramidate + H2O = AMP + NH4(+). In terms of biological role, exhibits adenosine 5'-monophosphoramidase activity, hydrolyzing purine nucleotide phosphoramidates with a single phosphate group such as adenosine 5'monophosphoramidate (AMP-NH2) to yield AMP and NH2. Hydrolyzes adenosine 5'monophosphomorpholidate (AMP-morpholidate) and guanosine 5'monophosphomorpholidate (GMP-morpholidate). Hydrolyzes lysyl-AMP (AMP-N-epsilon-(N-alpha-acetyl lysine methyl ester)) generated by lysine tRNA ligase, as well as Met-AMP, His-AMP and Asp-AMP, lysyl-GMP (GMP-N-epsilon-(N-alpha-acetyl lysine methyl ester)) and AMP-N-alanine methyl ester. Can also convert adenosine 5'-O-phosphorothioate and guanosine 5'-O-phosphorothioate to the corresponding nucleoside 5'-O-phosphates with concomitant release of hydrogen sulfide. In addition, functions as a scaffolding protein that modulates transcriptional activation by the LEF1/TCF1-CTNNB1 complex and by the complex formed with MITF and CTNNB1. Modulates p53/TP53 levels and p53/TP53-mediated apoptosis. Modulates proteasomal degradation of target proteins by the SCF (SKP2-CUL1-F-box protein) E3 ubiquitin-protein ligase complex. Also exhibits SUMO-specific isopeptidase activity, deconjugating SUMO1 from RANGAP1 and RGS17. The sequence is that of Adenosine 5'-monophosphoramidase HINT1 (HINT1) from Pongo abelii (Sumatran orangutan).